Consider the following 168-residue polypeptide: Peptide deformylase (168 aa).

Positions 92 and 134 each coordinate Fe cation. Residue E135 is part of the active site. A Fe cation-binding site is contributed by H138.

This sequence belongs to the polypeptide deformylase family. Requires Fe(2+) as cofactor.

The catalysed reaction is N-terminal N-formyl-L-methionyl-[peptide] + H2O = N-terminal L-methionyl-[peptide] + formate. In terms of biological role, removes the formyl group from the N-terminal Met of newly synthesized proteins. Requires at least a dipeptide for an efficient rate of reaction. N-terminal L-methionine is a prerequisite for activity but the enzyme has broad specificity at other positions. This is Peptide deformylase from Teredinibacter turnerae (strain ATCC 39867 / T7901).